Reading from the N-terminus, the 114-residue chain is Large ribosomal subunit protein bL19 (114 aa).

Belongs to the bacterial ribosomal protein bL19 family.

Functionally, this protein is located at the 30S-50S ribosomal subunit interface and may play a role in the structure and function of the aminoacyl-tRNA binding site. This Clostridium botulinum (strain Loch Maree / Type A3) protein is Large ribosomal subunit protein bL19.